A 262-amino-acid chain; its full sequence is Imidazole glycerol phosphate synthase subunit HisF (262 aa).

Residues aspartate 11 and aspartate 130 contribute to the active site.

This sequence belongs to the HisA/HisF family. Heterodimer of HisH and HisF.

Its subcellular location is the cytoplasm. It catalyses the reaction 5-[(5-phospho-1-deoxy-D-ribulos-1-ylimino)methylamino]-1-(5-phospho-beta-D-ribosyl)imidazole-4-carboxamide + L-glutamine = D-erythro-1-(imidazol-4-yl)glycerol 3-phosphate + 5-amino-1-(5-phospho-beta-D-ribosyl)imidazole-4-carboxamide + L-glutamate + H(+). It participates in amino-acid biosynthesis; L-histidine biosynthesis; L-histidine from 5-phospho-alpha-D-ribose 1-diphosphate: step 5/9. Functionally, IGPS catalyzes the conversion of PRFAR and glutamine to IGP, AICAR and glutamate. The HisF subunit catalyzes the cyclization activity that produces IGP and AICAR from PRFAR using the ammonia provided by the HisH subunit. This chain is Imidazole glycerol phosphate synthase subunit HisF, found in Rhodopirellula baltica (strain DSM 10527 / NCIMB 13988 / SH1).